Here is a 63-residue protein sequence, read N- to C-terminus: Large ribosomal subunit protein uL29 (63 aa).

The protein belongs to the universal ribosomal protein uL29 family.

This chain is Large ribosomal subunit protein uL29, found in Klebsiella pneumoniae (strain 342).